The chain runs to 458 residues: Gamma aminobutyrate transaminase 2 (458 aa).

Gly114–Ser115 contributes to the pyridoxal 5'-phosphate binding site. Tyr147 is a binding site for substrate. Asp254 is a pyridoxal 5'-phosphate binding site. Substrate is bound at residue Lys283. Lys283 is subject to N6-(pyridoxal phosphate)lysine.

The protein belongs to the class-III pyridoxal-phosphate-dependent aminotransferase family. In terms of tissue distribution, expressed in leaves, roots, stems, flowers and fruits. Expressed in carpels, but not in stamens.

It localises to the cytoplasm. It carries out the reaction 4-aminobutanoate + pyruvate = succinate semialdehyde + L-alanine. The enzyme catalyses 4-aminobutanoate + glyoxylate = succinate semialdehyde + glycine. Functionally, transaminase that degrades gamma-amino butyric acid (GABA) and uses pyruvate or glyoxylate as amino-group acceptor. Cannot use beta-alanine, ornithine, acetylornithine, serine, glycine, asparagine, glutamine, glutamate, valine, leucine, isoleucine, methionine, phenylalanine, histidine, lysine, arginine, aspartate, threonine, tyrosine, tryptophan, proline, or cysteine as amino donors. May be responsible for establishing the GABA gradient in the carpel. This is Gamma aminobutyrate transaminase 2 (GABA-TP2) from Solanum lycopersicum (Tomato).